A 594-amino-acid polypeptide reads, in one-letter code: Proteasome-associated ATPase (594 aa).

A compositionally biased stretch (polar residues) spans 1 to 10 (MMETPNNDSS). Residues 1–23 (MMETPNNDSSRTPDEAAGAPDPE) form a disordered region. A coiled-coil region spans residues 35-86 (ADRQVNILRDKLRHIDRQLAAATQNNSKLVGMLETAKAEILRLKNALDQEGQ). Residue 282-287 (GCGKTL) coordinates ATP. Residues 593-594 (YL) form a docks into pockets in the proteasome alpha-ring region.

It belongs to the AAA ATPase family. In terms of assembly, homohexamer. Assembles into a hexameric ring structure that caps the 20S proteasome core. Strongly interacts with the prokaryotic ubiquitin-like protein Pup through a hydrophobic interface; the interacting region of ARC lies in its N-terminal coiled-coil domain. There is one Pup binding site per ARC hexamer ring. Upon ATP-binding, the C-terminus of ARC interacts with the alpha-rings of the proteasome core, possibly by binding to the intersubunit pockets.

Its pathway is protein degradation; proteasomal Pup-dependent pathway. In terms of biological role, ATPase which is responsible for recognizing, binding, unfolding and translocation of pupylated proteins into the bacterial 20S proteasome core particle. May be essential for opening the gate of the 20S proteasome via an interaction with its C-terminus, thereby allowing substrate entry and access to the site of proteolysis. Thus, the C-termini of the proteasomal ATPase may function like a 'key in a lock' to induce gate opening and therefore regulate proteolysis. The polypeptide is Proteasome-associated ATPase (Arthrobacter sp. (strain FB24)).